The primary structure comprises 200 residues: Nucleoside triphosphate pyrophosphatase (200 aa).

D79 acts as the Proton acceptor in catalysis.

Belongs to the Maf family. A divalent metal cation is required as a cofactor.

It is found in the cytoplasm. It catalyses the reaction a ribonucleoside 5'-triphosphate + H2O = a ribonucleoside 5'-phosphate + diphosphate + H(+). The enzyme catalyses a 2'-deoxyribonucleoside 5'-triphosphate + H2O = a 2'-deoxyribonucleoside 5'-phosphate + diphosphate + H(+). Nucleoside triphosphate pyrophosphatase. May have a dual role in cell division arrest and in preventing the incorporation of modified nucleotides into cellular nucleic acids. The protein is Nucleoside triphosphate pyrophosphatase of Legionella pneumophila (strain Corby).